A 370-amino-acid polypeptide reads, in one-letter code: Gametogenetin-binding protein 1 (370 aa).

2 disordered regions span residues 26-114 (VGSK…QTLT) and 240-263 (PAAP…EEAV). Positions 31–49 (GSKSTNKPLTRSQPSSSWE) are enriched in polar residues. Positions 225–370 (LYKQLQKSAM…DEMGNWPPPD (146 aa)) are required for induction of mitochondrial fragmentation. The span at 250–260 (GLPHEEKGERE) shows a compositional bias: basic and acidic residues. Positions 298–370 (KKFRSTDTVG…DEMGNWPPPD (73 aa)) are interaction with GGN.

Interacts with CCDC159. Interacts with isoform 1 and isoform 2 of GGN. Testis-specific. In the testis, expressed only in germ cells and not in somatic cells. Expression starts in late primary spermatocytes in stage X-XII tubules and gradually increases towards step 1-3 spermatids in stage I-III tubules. Expression then declines continuously and disappears after step 7 spermatids in stage VII tubules (at protein level).

The protein localises to the cytoplasm. It is found in the membrane. It localises to the golgi apparatus. The protein resides in the mitochondrion intermembrane space. Its function is as follows. Induces mitochondrial fragmentation, possibly by promoting DNM1L-dependent fission and may play a role in mitochondrial morphogenesis during spermatogenesis. This is Gametogenetin-binding protein 1 (Ggnbp1) from Mus musculus (Mouse).